The sequence spans 675 residues: NADH-quinone oxidoreductase subunit G (675 aa).

The 2Fe-2S ferredoxin-type domain occupies 1–78; it reads MIKLIIDGSE…GMVIHTDTPM (78 aa). Residues Cys34, Cys45, Cys48, and Cys62 each coordinate [2Fe-2S] cluster. A 4Fe-4S His(Cys)3-ligated-type domain is found at 78 to 117; the sequence is MVKKAREGVMEFLLINHPLDCPICDQGGECDLQDQAFRYG. Positions 94, 98, 101, 107, 146, 149, 152, and 196 each coordinate [4Fe-4S] cluster. One can recognise a 4Fe-4S Mo/W bis-MGD-type domain in the interval 215–271; the sequence is LKHTASIGVHDAEGSNIRIDSRADEIMRILPRVNEAINEEWLSDKNRFCYDGLKYQR.

Belongs to the complex I 75 kDa subunit family. Requires [2Fe-2S] cluster as cofactor. [4Fe-4S] cluster is required as a cofactor.

It catalyses the reaction a quinone + NADH + 5 H(+)(in) = a quinol + NAD(+) + 4 H(+)(out). NDH-1 shuttles electrons from NADH, via FMN and iron-sulfur (Fe-S) centers, to quinones in the respiratory chain. Couples the redox reaction to proton translocation (for every two electrons transferred, four hydrogen ions are translocated across the cytoplasmic membrane), and thus conserves the redox energy in a proton gradient. The sequence is that of NADH-quinone oxidoreductase subunit G (nuoG) from Rickettsia prowazekii (strain Madrid E).